Consider the following 116-residue polypeptide: NADPH-dependent 7-cyano-7-deazaguanine reductase (116 aa).

Cysteine 31 functions as the Thioimide intermediate in the catalytic mechanism. The active-site Proton donor is aspartate 38. Residues 53–55 (VEL) and 72–73 (YE) each bind substrate.

The protein belongs to the GTP cyclohydrolase I family. QueF type 1 subfamily.

It localises to the cytoplasm. It catalyses the reaction 7-aminomethyl-7-carbaguanine + 2 NADP(+) = 7-cyano-7-deazaguanine + 2 NADPH + 3 H(+). It functions in the pathway tRNA modification; tRNA-queuosine biosynthesis. In terms of biological role, catalyzes the NADPH-dependent reduction of 7-cyano-7-deazaguanine (preQ0) to 7-aminomethyl-7-deazaguanine (preQ1). The sequence is that of NADPH-dependent 7-cyano-7-deazaguanine reductase from Chlorobium chlorochromatii (strain CaD3).